The chain runs to 215 residues: Cytochrome b6 (215 aa).

The helical transmembrane segment at 32-52 threads the bilayer; it reads IFYCLGGITLTCFLVQVATGF. Cysteine 35 is a binding site for heme c. Heme b is bound by residues histidine 86 and histidine 100. 3 helical membrane passes run 90 to 110, 116 to 136, and 186 to 206; these read ASMMVLMMILHVFRVYLTGGF, LTWVTGVILSVITVSFGVTGY, and LHTFVLPLLAAVFMLMHFLMI. Heme b contacts are provided by histidine 187 and histidine 202.

This sequence belongs to the cytochrome b family. PetB subfamily. As to quaternary structure, the 4 large subunits of the cytochrome b6-f complex are cytochrome b6, subunit IV (17 kDa polypeptide, PetD), cytochrome f and the Rieske protein, while the 4 small subunits are PetG, PetL, PetM and PetN. The complex functions as a dimer. It depends on heme b as a cofactor. The cofactor is heme c.

The protein localises to the plastid. The protein resides in the chloroplast thylakoid membrane. Component of the cytochrome b6-f complex, which mediates electron transfer between photosystem II (PSII) and photosystem I (PSI), cyclic electron flow around PSI, and state transitions. In Ostreococcus tauri, this protein is Cytochrome b6.